Here is a 555-residue protein sequence, read N- to C-terminus: MSEAEARPTNFIRQIIDEDLASGKHTTICTRFPPEPNGYLHIGHAKSICLNFGIAQDYHGQCNLRFDDTNPVKEDLEFVESIKNDVQWLGFHWSGDVRYSSDYFDQLYNYAVELINKGLAYVDELSPEQIREYRGTLTAPGKNSPFRDRSVEENLALFEKMRAGGFEEGKACLRAKIDMASPFIVMRDPVLYRIKFAEHHQTGNKWCIYPMYDFTHCISDALEGITHSLCTLEFQDNRRLYDWVLDNITIPVHPRQYEFSRLNLEYTVMSKRKLNLLVTDKHVEGWDDPRMPTISGLRRRGYTAASIREFCKRIGVTKQDNTVEMAALEACIREDLNENAPRAMAVIDPVKLVIENYPQGHSEMVSMPNHPNKPEMGNRDVPFSGEIWIDRADFREEANKQYKRLVLGKEVRLRNAYVIKAERVEKDDAGEITTIYCTYDAETLSKDPADGRKVKGVIHWVSAAHALPVEIRLYDRLFSVPNPGAAEDFLTTINKDSLVIKQGYAEPGLKNAEAGKAWQFEREGYFCLDSRHANGDKLVFNRTVGLRDTWAKIGE.

A 'HIGH' region motif is present at residues 34-44 (PEPNGYLHIGH). ATP-binding positions include 35-37 (EPN) and 41-47 (HIGHAKS). Positions 67 and 212 each coordinate L-glutamine. Residues Thr231, 261–262 (RL), and 269–271 (MSK) each bind ATP. The 'KMSKS' region signature appears at 268 to 272 (VMSKR).

Belongs to the class-I aminoacyl-tRNA synthetase family. Monomer.

It is found in the cytoplasm. It carries out the reaction tRNA(Gln) + L-glutamine + ATP = L-glutaminyl-tRNA(Gln) + AMP + diphosphate. This Cronobacter sakazakii (strain ATCC BAA-894) (Enterobacter sakazakii) protein is Glutamine--tRNA ligase.